Reading from the N-terminus, the 443-residue chain is KH domain-containing, RNA-binding, signal transduction-associated protein 1 (443 aa).

The segment at 1–95 (MQRRDDPAAR…LLPPSATAAA (95 aa)) is disordered. Phosphoserine occurs at positions 18 and 20. Lys21 bears the N6-acetyllysine mark. Ser29 bears the Phosphoserine mark. The residue at position 33 (Thr33) is a Phosphothreonine. 2 positions are modified to asymmetric dimethylarginine; by PRMT1: Arg45 and Arg52. At Ser58 the chain carries Phosphoserine. Residues 61 to 72 (TQPPPLLPPSNP) are compositionally biased toward pro residues. The segment covering 81-95 (SAPTPLLPPSATAAA) has biased composition (low complexity). A Phosphothreonine; by MAPK1 modification is found at Thr84. Residues Lys96 and Lys102 each participate in a glycyl lysine isopeptide (Lys-Gly) (interchain with G-Cter in SUMO2) cross-link. Residues 100-260 (ENKYLPELMA…VKKFLVPDMM (161 aa)) form an involved in homodimerization region. Ser113 is subject to Phosphoserine. Lys139 participates in a covalent cross-link: Glycyl lysine isopeptide (Lys-Gly) (interchain with G-Cter in SUMO2). Ser150 bears the Phosphoserine mark. Positions 171-197 (NFVGKILGPQGNTIKRLQEETGAKISV) constitute a KH domain. Position 175 is an N6-acetyllysine; alternate (Lys175). Lys175 is covalently cross-linked (Glycyl lysine isopeptide (Lys-Gly) (interchain with G-Cter in SUMO2); alternate). Residue Thr183 is modified to Phosphothreonine. The segment at 280-317 (PSRGRGVSVRGRGAAPPPPPVPRGRGVGPPRGALVRGT) is disordered. 3 positions are modified to omega-N-methylarginine: Arg282, Arg284, and Arg291. Positions 283-293 (GRGVSVRGRGA) are enriched in low complexity. Arg304 is modified (asymmetric dimethylarginine; by PRMT1). Positions 307 to 316 (GPPRGALVRG) are enriched in low complexity. 2 positions are modified to omega-N-methylarginine; by PRMT1: Arg310 and Arg315. Arg320 carries the post-translational modification Dimethylated arginine; alternate. Arg320 is modified (omega-N-methylarginine; by PRMT1; alternate). Omega-N-methylarginine; by PRMT1 is present on Arg325. The interval 326–345 (GATVTRGVPPPPTVRGAPTP) is disordered. Arg331 and Arg340 each carry dimethylated arginine; alternate. An omega-N-methylarginine; by PRMT1; alternate mark is found at Arg331 and Arg340. Asymmetric dimethylarginine; alternate is present on Arg331. Positions 351-443 (GIQRIPLPPT…AYREHPYGRY (93 aa)) are interaction with HNRNPA1. At Tyr387 the chain carries Phosphotyrosine. A Phosphoserine modification is found at Ser390. The segment at 400-420 (GHGELQDSYEAYGQDDWNGTR) is interaction with ZBTB7A. The interval 411 to 443 (YGQDDWNGTRPSLKAPPARPVKGAYREHPYGRY) is disordered. Lys432 is covalently cross-linked (Glycyl lysine isopeptide (Lys-Gly) (interchain with G-Cter in SUMO2)). Basic and acidic residues predominate over residues 434 to 443 (AYREHPYGRY). A phosphotyrosine; by PTK6 mark is found at Tyr435, Tyr440, and Tyr443.

Belongs to the KHDRBS family. As to quaternary structure, self-associates to form homooligomers when bound to RNA, oligomerization appears to be limited when binding to proteins. Interacts with KHDRBS3/SLIM-2. Forms a trimeric complex in the nucleus consisting of BANP, HDAC6 and KHDRBS1/SAM68; HDAC6 keeps KHDRBS1 in a deacetylated state which inhibits the inclusion of CD44 alternate exons. The complex is disrupted by MAPK1/MAPK3-mediated phosphorylation of BANP which results in BANP export to the cytoplasm. This facilitates acetylation of KHDRBS1 and CD44 variant exon inclusion. Interacts with KHDRBS2/SLIM-1; heterooligomer formation of KHDRBS family proteins may modulate RNA substrate specificity. Interacts with PIK3R1, PLCG1. Interacts with RASA1, GRB2, SRC, CBP, PRMT1, APC, HNRNPA1. Interacts with PTK6 (via SH3 and SH2 domains). Forms a complex with ILF2, ILF3, YLPM1, RBMX, NCOA5 and PPP1CA. Binds WBP4/FBP21 (via WW domains), FNBP4/FBP30 (via WW domains). Interacts (via Arg/Gly-rich-flanked Pro-rich regions) with FYN (via the SH3 domain). Interacts with the non-receptor tyrosine kinase SRMS; the interaction leads to phosphorylation of KHDRBS1. Interacts with ZBTB7A; negatively regulates KHDRBS1 splicing activity toward BCL2L1. Tyrosine phosphorylated by several non-receptor tyrosine kinases including LCK, FYN and JAK3. Also tyrosine phosphorylated by the non-receptor tyrosine kinase SRMS in an EGF-dependent manner. Phosphorylation by PTK6 negatively regulates its RNA binding ability. Phosphorylation by PTK6 at Tyr-440 dictates the nuclear localization of KHDRBS1. Post-translationally, acetylated. Positively correlates with ability to bind RNA. Deacetylated by HDAC6; this regulates alternative splicing by inhibiting the inclusion of CD44 alternate exons. In terms of processing, arginine methylation is required for nuclear localization, Inhibits interaction with Src-like SH3 domains, but not interaction with WW domains of WBP4/FBP21 and FNBP4/FBP30.

The protein localises to the nucleus. Its subcellular location is the cytoplasm. It localises to the membrane. Functionally, recruited and tyrosine phosphorylated by several receptor systems, for example the T-cell, leptin and insulin receptors. Once phosphorylated, functions as an adapter protein in signal transduction cascades by binding to SH2 and SH3 domain-containing proteins. Role in G2-M progression in the cell cycle. Represses CBP-dependent transcriptional activation apparently by competing with other nuclear factors for binding to CBP. Also acts as a putative regulator of mRNA stability and/or translation rates and mediates mRNA nuclear export. Positively regulates the association of constitutive transport element (CTE)-containing mRNA with large polyribosomes and translation initiation. May not be involved in the nucleocytoplasmic export of unspliced (CTE)-containing RNA species. RNA-binding protein that plays a role in the regulation of alternative splicing and influences mRNA splice site selection and exon inclusion. Binds to RNA containing 5'-[AU]UAA-3' as a bipartite motif spaced by more than 15 nucleotides. Binds poly(A). Can regulate CD44 alternative splicing in a Ras pathway-dependent manner. In cooperation with HNRNPA1 modulates alternative splicing of BCL2L1 by promoting splicing toward isoform Bcl-X(S), and of SMN1. Can regulate alternative splicing of NRXN1 and NRXN3 in the laminin G-like domain 6 containing the evolutionary conserved neurexin alternative spliced segment 4 (AS4) involved in neurexin selective targeting to postsynaptic partners. In a neuronal activity-dependent manner cooperates synergistically with KHDRBS2/SLIM-1 in regulation of NRXN1 exon skipping at AS4. The cooperation with KHDRBS2/SLIM-1 is antagonistic for regulation of NXRN3 alternative splicing at AS4. The sequence is that of KH domain-containing, RNA-binding, signal transduction-associated protein 1 from Rattus norvegicus (Rat).